A 632-amino-acid polypeptide reads, in one-letter code: Extracellular metalloproteinase 2 (632 aa).

An N-terminal signal peptide occupies residues 1–19; it reads MHGLLLAGLAAALPLGVAG. Positions 20 to 244 are excised as a propeptide; sequence LPARQQSGLS…VHNVVDYVAS (225 aa). A glycan (N-linked (GlcNAc...) asparagine) is linked at Asn270. His429 lines the Zn(2+) pocket. The active site involves Glu430. His433 lines the Zn(2+) pocket.

This sequence belongs to the peptidase M36 family. Zn(2+) is required as a cofactor.

Its subcellular location is the secreted. Secreted metalloproteinase that allows assimilation of proteinaceous substrates and probably acts as a virulence factor. The sequence is that of Extracellular metalloproteinase 2 (MEP2) from Arthroderma gypseum (strain ATCC MYA-4604 / CBS 118893) (Microsporum gypseum).